We begin with the raw amino-acid sequence, 60 residues long: Adenylate kinase isoenzyme 1 (60 aa).

Residue 9–14 participates in ATP binding; sequence GSGKGT. Ser25 is modified (phosphoserine). Residues 25–53 are NMP; it reads STGDLLRVDSSNGFLIDGYPRQGEEFERK. Residues Thr26 and Arg31 each coordinate AMP.

The protein belongs to the adenylate kinase family. AK1 subfamily. In terms of assembly, monomer. Mg(2+) serves as cofactor.

The protein resides in the cytoplasm. It catalyses the reaction a ribonucleoside 5'-phosphate + ATP = a ribonucleoside 5'-diphosphate + ADP. The catalysed reaction is AMP + ATP = 2 ADP. It carries out the reaction dAMP + ATP = dADP + ADP. The enzyme catalyses dATP + AMP = dADP + ADP. It catalyses the reaction dAMP + dATP = 2 dADP. The catalysed reaction is a 2'-deoxyribonucleoside 5'-diphosphate + ATP = a 2'-deoxyribonucleoside 5'-triphosphate + ADP. It carries out the reaction a ribonucleoside 5'-diphosphate + ATP = a ribonucleoside 5'-triphosphate + ADP. The enzyme catalyses CDP + GTP = CTP + GDP. It catalyses the reaction GDP + ATP = GTP + ADP. The catalysed reaction is UDP + ATP = UTP + ADP. It carries out the reaction GTP + UDP = UTP + GDP. The enzyme catalyses dTDP + GTP = dTTP + GDP. It catalyses the reaction dCDP + GTP = dCTP + GDP. The catalysed reaction is dGDP + ATP = dGTP + ADP. It carries out the reaction dADP + GTP = dATP + GDP. The enzyme catalyses thiamine diphosphate + ADP = thiamine triphosphate + AMP. Catalyzes the reversible transfer of the terminal phosphate group between ATP and AMP. Also displays broad nucleoside diphosphate kinase activity. Plays an important role in cellular energy homeostasis and in adenine nucleotide metabolism. Also catalyzes at a very low rate the synthesis of thiamine triphosphate (ThTP) from thiamine diphosphate (ThDP) and ADP. In Mesocricetus auratus (Golden hamster), this protein is Adenylate kinase isoenzyme 1 (Ak1).